An 870-amino-acid polypeptide reads, in one-letter code: H(+)/Cl(-) exchange transporter 6 (870 aa).

Residues 1-80 (MAGCRGSVCC…KKGRRYEAVK (80 aa)) lie on the Cytoplasmic side of the membrane. A run of 2 helical transmembrane segments spans residues 81–113 (WMVV…FGVV) and 128–150 (LSLL…LVLI). Positions 156 to 160 (GSGIP) match the Selectivity filter part_1 motif. S157 serves as a coordination point for chloride. Residues 159 to 166 (IPEIKCYL) constitute an intramembrane region (helical). Helical transmembrane passes span 176-194 (RLRT…VSGG) and 200-217 (EGPM…LPQF). A Selectivity filter part_2 motif is present at residues 198 to 202 (GKEGP). 2 consecutive intramembrane regions (helical) follow at residues 241–253 (FVSA…VAAA) and 257–265 (PIGGTLFSL). 3 helical membrane passes run 277–294 (TWKV…LNFF), 335–364 (GFFV…YRMR), and 371–392 (KLVR…VFVA). N-linked (GlcNAc...) asparagine glycans are attached at residues N410, N423, and N433. 2 helical membrane-spanning segments follow: residues 463–482 (PVTL…WTFG) and 488–512 (GLFV…KSYI). The Selectivity filter part_3 motif lies at 488 to 492 (GLFVP). Position 490 (F490) interacts with chloride. The segment at residues 520-534 (GTFALIGAAAFLGGV) is an intramembrane region (helical). The segment at residues 535 to 537 (VRM) is an intramembrane region (note=Loop between two helices). An intramembrane region (helical) is located at residues 538 to 549 (TISLTVILIEST). Positions 550 to 553 (NEIT) form an intramembrane region, note=Loop between two helices. Residues 554 to 572 (YGLPIMVTLMVAKWTGDLF) form a helical membrane-spanning segment. Over 573–870 (NKGIYDVHIG…ARLRQHYQTL (298 aa)) the chain is Cytoplasmic. Position 577 (Y577) interacts with chloride. The CBS 1 domain maps to 606–663 (MEPNLTYVYPHTRIQSLVSILRTTVHHAFPVVTENRGNEKEFMKGNQLISNNIKFKKS). 631-633 (HHA) serves as a coordination point for ATP. Position 774 is a phosphoserine (S774). One can recognise a CBS 2 domain in the interval 808-869 (MNPSPFTVSP…QARLRQHYQT (62 aa)). Position 850–853 (850–853 (TRHN)) interacts with ATP.

This sequence belongs to the chloride channel (TC 2.A.49) family. ClC-6/CLCN6 subfamily. N-glycosylated on several asparagine residues. Detected in whole brain and in hippocampus neurons (at protein level). Detected in brain, trigeminus, dorsal root ganglion, spinal cord, eye, kidney, testis, skeletal muscle, thymus and pancreas. Isoform ClC-6c is expressed only in kidney.

Its subcellular location is the late endosome membrane. The enzyme catalyses 2 chloride(in) + H(+)(out) = 2 chloride(out) + H(+)(in). Functionally, voltage-gated channel mediating the exchange of chloride ions against protons. Functions as antiporter and contributes to the acidification of the late endosome lumen. The CLC channel family contains both chloride channels and proton-coupled anion transporters that exchange chloride or another anion for protons. The presence of conserved gating glutamate residues is typical for family members that function as antiporters. This is H(+)/Cl(-) exchange transporter 6 from Mus musculus (Mouse).